We begin with the raw amino-acid sequence, 143 residues long: MSIIKEFKEFAVKGNVMDLAVGVIIGGAFSKIVDSVVKDLIMPVIGVLTGGLDFSNKFVLLGTVPASFKGNPDSFKDLQAAGVAVFGYGSFITVLINFIILAFIIFLMVKFINKLRKPAEAAPAATPEDIVLLREIRDSLKQR.

A run of 2 helical transmembrane segments spans residues 10–30 (FAVK…GAFS) and 89–109 (GSFI…FLMV).

Belongs to the MscL family. In terms of assembly, homopentamer.

The protein localises to the cell inner membrane. Its function is as follows. Channel that opens in response to stretch forces in the membrane lipid bilayer. May participate in the regulation of osmotic pressure changes within the cell. The chain is Large-conductance mechanosensitive channel from Burkholderia multivorans (strain ATCC 17616 / 249).